A 161-amino-acid chain; its full sequence is Crossover junction endodeoxyribonuclease RuvC (161 aa).

Residues Asp8, Glu67, and Asp139 contribute to the active site. Mg(2+) contacts are provided by Asp8, Glu67, and Asp139.

This sequence belongs to the RuvC family. As to quaternary structure, homodimer which binds Holliday junction (HJ) DNA. The HJ becomes 2-fold symmetrical on binding to RuvC with unstacked arms; it has a different conformation from HJ DNA in complex with RuvA. In the full resolvosome a probable DNA-RuvA(4)-RuvB(12)-RuvC(2) complex forms which resolves the HJ. Requires Mg(2+) as cofactor.

The protein localises to the cytoplasm. It catalyses the reaction Endonucleolytic cleavage at a junction such as a reciprocal single-stranded crossover between two homologous DNA duplexes (Holliday junction).. Its function is as follows. The RuvA-RuvB-RuvC complex processes Holliday junction (HJ) DNA during genetic recombination and DNA repair. Endonuclease that resolves HJ intermediates. Cleaves cruciform DNA by making single-stranded nicks across the HJ at symmetrical positions within the homologous arms, yielding a 5'-phosphate and a 3'-hydroxyl group; requires a central core of homology in the junction. The consensus cleavage sequence is 5'-(A/T)TT(C/G)-3'. Cleavage occurs on the 3'-side of the TT dinucleotide at the point of strand exchange. HJ branch migration catalyzed by RuvA-RuvB allows RuvC to scan DNA until it finds its consensus sequence, where it cleaves and resolves the cruciform DNA. In Wigglesworthia glossinidia brevipalpis, this protein is Crossover junction endodeoxyribonuclease RuvC.